Consider the following 590-residue polypeptide: Beta-fructofuranosidase, insoluble isoenzyme 4 (590 aa).

The signal sequence occupies residues 1–28 (MVMAPIPQPWHQWPFLILFFLVLFSCES). Substrate contacts are provided by residues 71-74 (WIND) and Gln90. The active site involves Asp74. Asn94 carries N-linked (GlcNAc...) asparagine glycosylation. Residues Trp98 and 133 to 134 (WT) contribute to the substrate site. N-linked (GlcNAc...) asparagine glycosylation occurs at Asn167. Residue 198-199 (RD) coordinates substrate. N-linked (GlcNAc...) asparagine glycosylation is present at Asn247. Residues Glu253 and Asp287 each coordinate substrate. N-linked (GlcNAc...) asparagine glycosylation occurs at Asn345. A disulfide bridge links Cys445 with Cys491. N-linked (GlcNAc...) asparagine glycosylation is present at Asn565.

It belongs to the glycosyl hydrolase 32 family. As to expression, expressed in leaves. Expressed at moderate levels in roots and flowers, and weakly in seeds.

The protein resides in the secreted. It localises to the extracellular space. The protein localises to the apoplast. It is found in the cell wall. The enzyme catalyses Hydrolysis of terminal non-reducing beta-D-fructofuranoside residues in beta-D-fructofuranosides.. Functionally, may play a role in sucrose partitioning during seed development and in stress response. The polypeptide is Beta-fructofuranosidase, insoluble isoenzyme 4 (CIN4) (Oryza sativa subsp. japonica (Rice)).